A 267-amino-acid chain; its full sequence is Undecaprenyl-diphosphatase (267 aa).

Helical transmembrane passes span 39–59 (PGLA…IWYF), 87–107 (VLYL…LNDL), 112–132 (FRSP…LWAV), 145–165 (VTLR…VPGV), 183–203 (PSVA…AVIV), 216–236 (LPLL…ISVL), and 244–264 (SFGV…ATLA).

Belongs to the UppP family.

It is found in the cell inner membrane. The enzyme catalyses di-trans,octa-cis-undecaprenyl diphosphate + H2O = di-trans,octa-cis-undecaprenyl phosphate + phosphate + H(+). Catalyzes the dephosphorylation of undecaprenyl diphosphate (UPP). Confers resistance to bacitracin. In Gemmatimonas aurantiaca (strain DSM 14586 / JCM 11422 / NBRC 100505 / T-27), this protein is Undecaprenyl-diphosphatase.